The chain runs to 123 residues: Cytochrome c-555 (123 aa).

The N-terminal stretch at 1 to 27 is a signal peptide; it reads MDHKKTSIRTTALAALVLGAVAAPAFS. The heme c site is built by Cys46, Cys49, His50, and Met86.

Binds 1 heme c group covalently per subunit.

This is Cytochrome c-555 from Methylococcus capsulatus (strain ATCC 33009 / NCIMB 11132 / Bath).